Here is a 418-residue protein sequence, read N- to C-terminus: UDP-N-acetylglucosamine 1-carboxyvinyltransferase (418 aa).

22–23 (KN) lines the phosphoenolpyruvate pocket. UDP-N-acetyl-alpha-D-glucosamine is bound at residue Arg93. Catalysis depends on Cys117, which acts as the Proton donor. Residue Cys117 is modified to 2-(S-cysteinyl)pyruvic acid O-phosphothioketal. 2 residues coordinate UDP-N-acetyl-alpha-D-glucosamine: Asp305 and Val327.

The protein belongs to the EPSP synthase family. MurA subfamily.

The protein resides in the cytoplasm. The enzyme catalyses phosphoenolpyruvate + UDP-N-acetyl-alpha-D-glucosamine = UDP-N-acetyl-3-O-(1-carboxyvinyl)-alpha-D-glucosamine + phosphate. Its pathway is cell wall biogenesis; peptidoglycan biosynthesis. Its function is as follows. Cell wall formation. Adds enolpyruvyl to UDP-N-acetylglucosamine. This chain is UDP-N-acetylglucosamine 1-carboxyvinyltransferase, found in Halorhodospira halophila (strain DSM 244 / SL1) (Ectothiorhodospira halophila (strain DSM 244 / SL1)).